A 921-amino-acid chain; its full sequence is Translation initiation factor IF-2 (921 aa).

Disordered stretches follow at residues 81–118 (AVAE…AAAP), 175–194 (PVVE…ANQA), and 219–301 (VAPA…KKHE). Pro residues predominate over residues 96–112 (PAAPTPPEVPAAAPAPP). Residues 229–241 (RPSPAAGAPSRGA) are compositionally biased toward low complexity. Residues 292 to 301 (KKKEQPKKHE) show a composition bias toward basic and acidic residues. Positions 421–590 (KRPPVVTIMG…LLQADLMELK (170 aa)) constitute a tr-type G domain. Residues 430–437 (GHVDHGKT) form a G1 region. 430–437 (GHVDHGKT) lines the GTP pocket. Residues 455-459 (GITQH) form a G2 region. The tract at residues 476–479 (DTPG) is G3. GTP contacts are provided by residues 476 to 480 (DTPGH) and 530 to 533 (NKID). The interval 530-533 (NKID) is G4. The G5 stretch occupies residues 566–568 (SAK).

Belongs to the TRAFAC class translation factor GTPase superfamily. Classic translation factor GTPase family. IF-2 subfamily.

The protein localises to the cytoplasm. Its function is as follows. One of the essential components for the initiation of protein synthesis. Protects formylmethionyl-tRNA from spontaneous hydrolysis and promotes its binding to the 30S ribosomal subunits. Also involved in the hydrolysis of GTP during the formation of the 70S ribosomal complex. In Pelobacter propionicus (strain DSM 2379 / NBRC 103807 / OttBd1), this protein is Translation initiation factor IF-2.